A 172-amino-acid chain; its full sequence is Phosphopantetheine adenylyltransferase (172 aa).

Substrate is bound at residue T14. ATP contacts are provided by residues 14–15 (TF) and H22. Residues K46, L78, and R92 each coordinate substrate. ATP is bound by residues 93-95 (GMR), E103, and 128-134 (WLYISST).

This sequence belongs to the bacterial CoaD family. Homohexamer. Mg(2+) is required as a cofactor.

It is found in the cytoplasm. It carries out the reaction (R)-4'-phosphopantetheine + ATP + H(+) = 3'-dephospho-CoA + diphosphate. It functions in the pathway cofactor biosynthesis; coenzyme A biosynthesis; CoA from (R)-pantothenate: step 4/5. In terms of biological role, reversibly transfers an adenylyl group from ATP to 4'-phosphopantetheine, yielding dephospho-CoA (dPCoA) and pyrophosphate. The sequence is that of Phosphopantetheine adenylyltransferase from Solidesulfovibrio magneticus (strain ATCC 700980 / DSM 13731 / RS-1) (Desulfovibrio magneticus).